The sequence spans 141 residues: MFMGEYNHIIDAKGRIIVPSKFRDSLGEHFVVTVGLDGCLFVYPNEEWQHFVEQLKNLPGNKEARQLQRYFMAGAADCEVDKQGRILIPGNLRQHAGLDKDIVFVGVLSKIEIWSKERWESNSYDNMDEIADHMSEFGLSF.

2 consecutive SpoVT-AbrB domains span residues 5–47 (EYNH…PNEE) and 75–118 (AADC…SKER).

This sequence belongs to the MraZ family. Forms oligomers.

Its subcellular location is the cytoplasm. The protein localises to the nucleoid. The sequence is that of Transcriptional regulator MraZ from Lachnoclostridium phytofermentans (strain ATCC 700394 / DSM 18823 / ISDg) (Clostridium phytofermentans).